The sequence spans 298 residues: Protein FAM221A (298 aa).

Positions 241-257 (SSPETLTDVGTSSQVSS) are enriched in polar residues. The tract at residues 241 to 263 (SSPETLTDVGTSSQVSSLRRPEE) is disordered.

It belongs to the FAM221 family.

The chain is Protein FAM221A (FAM221A) from Homo sapiens (Human).